Reading from the N-terminus, the 318-residue chain is Homoserine kinase (318 aa).

Residue 97-107 participates in ATP binding; sequence PIGSGLGSSAC.

The protein belongs to the GHMP kinase family. Homoserine kinase subfamily.

The protein localises to the cytoplasm. The catalysed reaction is L-homoserine + ATP = O-phospho-L-homoserine + ADP + H(+). Its pathway is amino-acid biosynthesis; L-threonine biosynthesis; L-threonine from L-aspartate: step 4/5. In terms of biological role, catalyzes the ATP-dependent phosphorylation of L-homoserine to L-homoserine phosphate. The protein is Homoserine kinase of Vibrio cholerae serotype O1 (strain M66-2).